A 446-amino-acid chain; its full sequence is Saccharopine dehydrogenase [NADP(+), L-glutamate-forming] (446 aa).

NADP(+) is bound by residues 10-13 (SGFV), 33-35 (CRT), 54-55 (DV), Ile-75, 97-98 (SS), 124-126 (LDP), and Ser-174. Residues 98–99 (SY) and Asp-125 each bind L-saccharopine. L-saccharopine contacts are provided by residues Arg-223 and 244 to 246 (TLR).

The protein belongs to the saccharopine dehydrogenase family. Interacts with TRM112.

The catalysed reaction is L-saccharopine + NADP(+) + H2O = (S)-2-amino-6-oxohexanoate + L-glutamate + NADPH + H(+). It functions in the pathway amino-acid biosynthesis; L-lysine biosynthesis via AAA pathway; L-lysine from L-alpha-aminoadipate (fungal route): step 2/3. The chain is Saccharopine dehydrogenase [NADP(+), L-glutamate-forming] (LYS9) from Saccharomyces cerevisiae (strain ATCC 204508 / S288c) (Baker's yeast).